Reading from the N-terminus, the 482-residue chain is MEVVRYFTRNQKQLPATGPNDSIVQLPDIPPCYECNVEVALRFDSSLDSEKLQQSLKQLLEIGNWRQLGGRVRRRDTNPSACNYDLHVPAEFTTERPAFNYQIWELSGAIDEHPTASKMPRPTDPKKVSFYNVGDARSPLRTRTRYPRKAQEWADSDLPPLSFEQLSFRDGTIILLVFPHILMDATGYGLFLKAWTSVLQGRIDHVPQCCGFSESTTDMLGHKTPAGAFTWHNHLLKGLDSLKFTAGLLWENRWGKEDRVIRVPAKFIMHTRDKVLADLSTSQPSPFVSQSDVLIAWFTRVVLAALKPLQRRTLVLTNAFDTRHMLPPERAYLQNSVCMAHTMLPVGEVLYNPVSFLANEIRRSLVRERTEEQIQARCAWAKDVGIMPLLGTSDMLLCNVSNWSKGNLVDLDLCHAAVTEHRGPCVPSSILNCSQMGGVTPNYGIILGKDSQDCWWMQWHLPKFCWAGIERELDTINQIRWE.

Active-site proton acceptor residues include H180 and D412.

Belongs to the plant acyltransferase family. Monomer.

Its pathway is secondary metabolite biosynthesis; terpenoid biosynthesis. Its function is as follows. O-acyltransferase; part of the gene cluster B that mediates the biosynthesis of the fungal meroterpenoid acetoxydehydroaustin. The first step of the pathway is the synthesis of 3,5-dimethylorsellinic acid by the polyketide synthase ausA. 3,5-dimethylorsellinic acid is then prenylated by the polyprenyl transferase ausN. Further epoxidation by the FAD-dependent monooxygenase ausM and cyclization by the probable terpene cyclase ausL lead to the formation of protoaustinoid A. Protoaustinoid A is then oxidized to spiro-lactone preaustinoid A3 by the combined action of the FAD-binding monooxygenases ausB and ausC, and the dioxygenase ausE. Acid-catalyzed keto-rearrangement and ring contraction of the tetraketide portion of preaustinoid A3 by ausJ lead to the formation of preaustinoid A4. The aldo-keto reductase ausK, with the help of ausH, is involved in the next step by transforming preaustinoid A4 into isoaustinone which is in turn hydroxylated by the P450 monooxygenase ausI to form austinolide. The cytochrome P450 monooxygenase ausG then modifies austinolide to austinol. Austinol is further acetylated to austin by the O-acetyltransferase ausP, which spontaneously changes to dehydroaustin. The cytochrome P450 monooxygenase then converts dehydroaustin is into 7-dehydrodehydroaustin. The hydroxylation catalyzed by ausR permits the second O-acetyltransferase ausQ to add an additional acetyl group to the molecule, leading to the formation of acetoxydehydroaustin. Due to genetic rearrangements of the clusters and the subsequent loss of some enzymes, the end product of the Penicillium brasilianum austinoid biosynthesis clusters is acetoxydehydroaustin. In Penicillium brasilianum, this protein is O-acyltransferase ausP.